The following is a 249-amino-acid chain: Tetrahydromethanopterin S-methyltransferase subunit A (249 aa).

At 1–227 (MADKKEVIQN…KISSGYYAGK (227 aa)) the chain is on the cytoplasmic side. 5-hydroxybenzimidazolylcob(I)amide is bound at residue histidine 84. Residues 228 to 248 (IEGIVIGFILTLVFLIIIIQG) traverse the membrane as a helical segment. Leucine 249 is a topological domain (extracellular).

The protein belongs to the MtrA family. As to quaternary structure, the complex is composed of 8 subunits; MtrA, MtrB, MtrC, MtrD, MtrE, MtrF, MtrG and MtrH. The cofactor is 5-hydroxybenzimidazolylcob(I)amide.

It localises to the cell membrane. The catalysed reaction is 5-methyl-5,6,7,8-tetrahydromethanopterin + coenzyme M + 2 Na(+)(in) = 5,6,7,8-tetrahydromethanopterin + methyl-coenzyme M + 2 Na(+)(out). Its pathway is one-carbon metabolism; methanogenesis from CO(2); methyl-coenzyme M from 5,10-methylene-5,6,7,8-tetrahydromethanopterin: step 2/2. Part of a complex that catalyzes the formation of methyl-coenzyme M and tetrahydromethanopterin from coenzyme M and methyl-tetrahydromethanopterin. This is an energy-conserving, sodium-ion translocating step. This chain is Tetrahydromethanopterin S-methyltransferase subunit A, found in Methanosphaera stadtmanae (strain ATCC 43021 / DSM 3091 / JCM 11832 / MCB-3).